The chain runs to 251 residues: Hydroxyacylglutathione hydrolase (251 aa).

Zn(2+) contacts are provided by His53, His55, Asp57, His58, His110, Asp127, and His165.

This sequence belongs to the metallo-beta-lactamase superfamily. Glyoxalase II family. In terms of assembly, monomer. Requires Zn(2+) as cofactor.

The catalysed reaction is an S-(2-hydroxyacyl)glutathione + H2O = a 2-hydroxy carboxylate + glutathione + H(+). Its pathway is secondary metabolite metabolism; methylglyoxal degradation; (R)-lactate from methylglyoxal: step 2/2. Its function is as follows. Thiolesterase that catalyzes the hydrolysis of S-D-lactoyl-glutathione to form glutathione and D-lactic acid. This is Hydroxyacylglutathione hydrolase from Salmonella typhi.